The sequence spans 119 residues: uncharacterized protein (119 aa).

2 helical membrane passes run 53 to 73 (AATI…SFLA) and 92 to 112 (FITH…WFLF).

It is found in the membrane. This is an uncharacterized protein from Saccharomyces cerevisiae (strain ATCC 204508 / S288c) (Baker's yeast).